Reading from the N-terminus, the 126-residue chain is Profilin (126 aa).

Belongs to the profilin family. Occurs in many kinds of cells as a complex with monomeric actin in a 1:1 ratio.

Its subcellular location is the cytoplasm. The protein resides in the cytoskeleton. Its function is as follows. Binds to actin and affects the structure of the cytoskeleton. At high concentrations, profilin prevents the polymerization of actin, whereas it enhances it at low concentrations. By binding to PIP2, it inhibits the formation of IP3 and DG. The sequence is that of Profilin (PFY1) from Saccharomyces cerevisiae (strain ATCC 204508 / S288c) (Baker's yeast).